The following is a 198-amino-acid chain: ATP synthase subunit delta (198 aa).

Belongs to the ATPase delta chain family. As to quaternary structure, F-type ATPases have 2 components, F(1) - the catalytic core - and F(0) - the membrane proton channel. F(1) has five subunits: alpha(3), beta(3), gamma(1), delta(1), epsilon(1). F(0) has three main subunits: a(1), b(2) and c(10-14). The alpha and beta chains form an alternating ring which encloses part of the gamma chain. F(1) is attached to F(0) by a central stalk formed by the gamma and epsilon chains, while a peripheral stalk is formed by the delta and b chains.

Its subcellular location is the cell inner membrane. Its function is as follows. F(1)F(0) ATP synthase produces ATP from ADP in the presence of a proton or sodium gradient. F-type ATPases consist of two structural domains, F(1) containing the extramembraneous catalytic core and F(0) containing the membrane proton channel, linked together by a central stalk and a peripheral stalk. During catalysis, ATP synthesis in the catalytic domain of F(1) is coupled via a rotary mechanism of the central stalk subunits to proton translocation. This protein is part of the stalk that links CF(0) to CF(1). It either transmits conformational changes from CF(0) to CF(1) or is implicated in proton conduction. This is ATP synthase subunit delta from Gluconacetobacter diazotrophicus (strain ATCC 49037 / DSM 5601 / CCUG 37298 / CIP 103539 / LMG 7603 / PAl5).